The chain runs to 252 residues: Chlorophyll a-b binding protein P4, chloroplastic (252 aa).

A chlorophyll b-binding site is contributed by W56. Positions 76 and 95 each coordinate chlorophyll a. R100 is a binding site for chlorophyll b. 2 helical membrane passes run 101 to 121 (WAML…IGII) and 134 to 154 (YFAS…YVEI). Chlorophyll b is bound by residues S137, V143, E153, and R156. Residues K203, E204, N207, R209, Q221, and H236 each contribute to the chlorophyll a site.

The protein belongs to the light-harvesting chlorophyll a/b-binding (LHC) protein family. In terms of assembly, the LHC complex consists of chlorophyll a-b binding proteins. Binds at least 14 chlorophylls (8 Chl-a and 6 Chl-b) and carotenoids such as lutein and neoxanthin. is required as a cofactor. Photoregulated by reversible phosphorylation of its threonine residues.

Its subcellular location is the plastid. It localises to the chloroplast thylakoid membrane. Its function is as follows. The light-harvesting complex (LHC) functions as a light receptor, it captures and delivers excitation energy to photosystems with which it is closely associated. In terms of biological role, may channel protons produced in the catalytic Mn center of water oxidation into the thylakoid lumen. This Pisum sativum (Garden pea) protein is Chlorophyll a-b binding protein P4, chloroplastic.